Consider the following 74-residue polypeptide: uncharacterized protein (74 aa).

Positions 55–74 are disordered; that stretch reads DENSESESKDGASWFKVYRG.

This is an uncharacterized protein from Listeria innocua serovar 6a (strain ATCC BAA-680 / CLIP 11262).